The sequence spans 103 residues: Small ribosomal subunit protein uS10 (103 aa).

It belongs to the universal ribosomal protein uS10 family. As to quaternary structure, part of the 30S ribosomal subunit.

Its function is as follows. Involved in the binding of tRNA to the ribosomes. The protein is Small ribosomal subunit protein uS10 of Stutzerimonas stutzeri (strain A1501) (Pseudomonas stutzeri).